Reading from the N-terminus, the 625-residue chain is Clathrin interactor 1 (625 aa).

In terms of domain architecture, ENTH spans asparagine 16 to arginine 149. Arginine 29 lines the a 1,2-diacyl-sn-glycero-3-phospho-(1D-myo-inositol-4,5-bisphosphate) pocket. The segment at phenylalanine 52–tyrosine 54 is interaction with VTI1B. Arginine 67 is an a 1,2-diacyl-sn-glycero-3-phospho-(1D-myo-inositol-4,5-bisphosphate) binding site. Interaction with VTI1B stretches follow at residues serine 94–arginine 96 and aspartate 142–lysine 153. Phosphoserine occurs at positions 163, 166, 173, 205, 210, 227, 245, and 299. The tract at residues phenylalanine 219–aspartate 331 is disordered. A compositionally biased stretch (basic and acidic residues) spans lysine 222–lysine 239. At threonine 308 the chain carries Phosphothreonine. Positions threonine 308 to serine 323 are enriched in low complexity. The residue at position 312 (serine 312) is a Phosphoserine. The interaction with AP1G1, AP1G2 and GGA2 stretch occupies residues serine 340–serine 352. The interval glycine 368–glutamine 380 is interaction with AP1G1 and AP1G2. Position 624 is a phosphoserine (serine 624).

This sequence belongs to the epsin family. Binds clathrin heavy chain and AP-2. Interacts with VTI1B. Interacts with GGA2 (via GAE domain). Interacts with AP1G1 (via GAE domain). Interacts with AP1G2 (via GAE domain). Ubiquitously expressed at low to intermediate levels.

The protein localises to the cytoplasm. It localises to the perinuclear region. It is found in the membrane. Its subcellular location is the cytoplasmic vesicle. The protein resides in the clathrin-coated vesicle. Its function is as follows. Binds to membranes enriched in phosphatidylinositol 4,5-bisphosphate (PtdIns(4,5)P2). May have a role in transport via clathrin-coated vesicles from the trans-Golgi network to endosomes. Stimulates clathrin assembly. The sequence is that of Clathrin interactor 1 (CLINT1) from Homo sapiens (Human).